Here is a 441-residue protein sequence, read N- to C-terminus: Amino-acid acetyltransferase (441 aa).

The N-acetyltransferase domain maps to 295–434 (EQVRRATIND…QALYNYQRRS (140 aa)).

The protein belongs to the acetyltransferase family. ArgA subfamily. In terms of assembly, homohexamer.

Its subcellular location is the cytoplasm. It catalyses the reaction L-glutamate + acetyl-CoA = N-acetyl-L-glutamate + CoA + H(+). The protein operates within amino-acid biosynthesis; L-arginine biosynthesis; N(2)-acetyl-L-ornithine from L-glutamate: step 1/4. This is Amino-acid acetyltransferase from Serratia proteamaculans (strain 568).